We begin with the raw amino-acid sequence, 623 residues long: Dictomallein-5 (623 aa).

A signal peptide spans 1–21 (MKIFIIKIILVLFNYVLLSYS). The region spanning 174 to 435 (PNVGQDYTLK…QNYFKNSIYY (262 aa)) is the Peptidase M66 domain. H327 serves as a coordination point for Zn(2+). The active site involves E328. H331 and H337 together coordinate Zn(2+).

The protein belongs to the dictomallein family. Zn(2+) serves as cofactor.

Its subcellular location is the secreted. This Dictyostelium discoideum (Social amoeba) protein is Dictomallein-5 (dtmlE).